The following is a 465-amino-acid chain: Soluble pyridine nucleotide transhydrogenase (465 aa).

36–45 (ERYNNVGGGC) provides a ligand contact to FAD.

It belongs to the class-I pyridine nucleotide-disulfide oxidoreductase family. It depends on FAD as a cofactor.

It is found in the cytoplasm. The catalysed reaction is NAD(+) + NADPH = NADH + NADP(+). In terms of biological role, conversion of NADPH, generated by peripheral catabolic pathways, to NADH, which can enter the respiratory chain for energy generation. This Serratia proteamaculans (strain 568) protein is Soluble pyridine nucleotide transhydrogenase.